The sequence spans 141 residues: Hemoglobin D subunit alpha (141 aa).

The Globin domain occupies 1–141 (MLTEDDKQLI…VSAVLAEKYR (141 aa)). Residue histidine 58 coordinates O2. Histidine 87 contacts heme b.

The protein belongs to the globin family. Tetramer of two alpha chains and two beta chains. In terms of tissue distribution, red blood cells.

Functionally, involved in oxygen transport from the lung to the various peripheral tissues. The polypeptide is Hemoglobin D subunit alpha (Aldabrachelys gigantea (Aldabra giant tortoise)).